The chain runs to 94 residues: MFQKQQRIGLVIYLYYNRDARKVIKYGDLYYHSRRSRYLVIYINKEDMEEKLKDISRLTFVKEVKVSAFDDIDCDFVGNLHREPLEPQALPEQG.

The protein belongs to the UPF0298 family.

Its subcellular location is the cytoplasm. The protein is UPF0298 protein SZO_03600 of Streptococcus equi subsp. zooepidemicus (strain H70).